The primary structure comprises 460 residues: ATP synthase subunit beta (460 aa).

G150–T157 contributes to the ATP binding site.

The protein belongs to the ATPase alpha/beta chains family. In terms of assembly, F-type ATPases have 2 components, CF(1) - the catalytic core - and CF(0) - the membrane proton channel. CF(1) has five subunits: alpha(3), beta(3), gamma(1), delta(1), epsilon(1). CF(0) has three main subunits: a(1), b(2) and c(9-12). The alpha and beta chains form an alternating ring which encloses part of the gamma chain. CF(1) is attached to CF(0) by a central stalk formed by the gamma and epsilon chains, while a peripheral stalk is formed by the delta and b chains.

The protein localises to the cell inner membrane. The enzyme catalyses ATP + H2O + 4 H(+)(in) = ADP + phosphate + 5 H(+)(out). Functionally, produces ATP from ADP in the presence of a proton gradient across the membrane. The catalytic sites are hosted primarily by the beta subunits. This chain is ATP synthase subunit beta, found in Salmonella gallinarum (strain 287/91 / NCTC 13346).